A 145-amino-acid chain; its full sequence is MLSIIQRVNCAKVVVDNQKVADINKGILALVCVEKEDTQQNFEKMADKIIKYRIFEDDAGKMNLSLVDIDAEIILVPQFTLAADTKKGNRPSFSSGCPPEIAKEKFKEFENIFRRKYNKVQTGIFGADMKVFLTNDGPVTFSFKI.

Residues 137 to 138 carry the Gly-cisPro motif, important for rejection of L-amino acids motif; it reads GP.

It belongs to the DTD family. In terms of assembly, homodimer.

It localises to the cytoplasm. It catalyses the reaction glycyl-tRNA(Ala) + H2O = tRNA(Ala) + glycine + H(+). The catalysed reaction is a D-aminoacyl-tRNA + H2O = a tRNA + a D-alpha-amino acid + H(+). Functionally, an aminoacyl-tRNA editing enzyme that deacylates mischarged D-aminoacyl-tRNAs. Also deacylates mischarged glycyl-tRNA(Ala), protecting cells against glycine mischarging by AlaRS. Acts via tRNA-based rather than protein-based catalysis; rejects L-amino acids rather than detecting D-amino acids in the active site. By recycling D-aminoacyl-tRNA to D-amino acids and free tRNA molecules, this enzyme counteracts the toxicity associated with the formation of D-aminoacyl-tRNA entities in vivo and helps enforce protein L-homochirality. This Francisella tularensis subsp. holarctica (strain FTNF002-00 / FTA) protein is D-aminoacyl-tRNA deacylase.